The sequence spans 181 residues: Large ribosomal subunit protein uL10 (181 aa).

Belongs to the universal ribosomal protein uL10 family. In terms of assembly, part of the ribosomal stalk of the 50S ribosomal subunit. The N-terminus interacts with L11 and the large rRNA to form the base of the stalk. The C-terminus forms an elongated spine to which L12 dimers bind in a sequential fashion forming a multimeric L10(L12)X complex.

Forms part of the ribosomal stalk, playing a central role in the interaction of the ribosome with GTP-bound translation factors. This is Large ribosomal subunit protein uL10 from Amoebophilus asiaticus (strain 5a2).